A 214-amino-acid chain; its full sequence is Holliday junction branch migration complex subunit RuvA (214 aa).

Positions M1 to A63 are domain I. Residues D64–G139 are domain II. Residues G139–S143 form a flexible linker region. A domain III region spans residues P144 to G214.

Belongs to the RuvA family. As to quaternary structure, homotetramer. Forms an RuvA(8)-RuvB(12)-Holliday junction (HJ) complex. HJ DNA is sandwiched between 2 RuvA tetramers; dsDNA enters through RuvA and exits via RuvB. An RuvB hexamer assembles on each DNA strand where it exits the tetramer. Each RuvB hexamer is contacted by two RuvA subunits (via domain III) on 2 adjacent RuvB subunits; this complex drives branch migration. In the full resolvosome a probable DNA-RuvA(4)-RuvB(12)-RuvC(2) complex forms which resolves the HJ.

The protein resides in the cytoplasm. Functionally, the RuvA-RuvB-RuvC complex processes Holliday junction (HJ) DNA during genetic recombination and DNA repair, while the RuvA-RuvB complex plays an important role in the rescue of blocked DNA replication forks via replication fork reversal (RFR). RuvA specifically binds to HJ cruciform DNA, conferring on it an open structure. The RuvB hexamer acts as an ATP-dependent pump, pulling dsDNA into and through the RuvAB complex. HJ branch migration allows RuvC to scan DNA until it finds its consensus sequence, where it cleaves and resolves the cruciform DNA. The sequence is that of Holliday junction branch migration complex subunit RuvA from Renibacterium salmoninarum (strain ATCC 33209 / DSM 20767 / JCM 11484 / NBRC 15589 / NCIMB 2235).